Here is a 42-residue protein sequence, read N- to C-terminus: Photosystem I reaction center subunit IX (42 aa).

The helical transmembrane segment at 7-27 (YLSIAPVLATLWFGFLVGSLI) threads the bilayer.

Belongs to the PsaJ family.

The protein resides in the plastid membrane. May help in the organization of the PsaE and PsaF subunits. This Aneura mirabilis (Parasitic liverwort) protein is Photosystem I reaction center subunit IX.